The chain runs to 150 residues: MITLNTLKDSTRKRKPRKRVGRGIGSKHGKTCGRGEKGAGARSGYKRRLGKEGGQMPLFMKLPLRGFSNAQFRRQFDVINLDQIEAVFKDGETVDELSLRERGFISGRTHGIKLLGNGDLTKKVKIHVHAISESAREKLTQAKVSFEIVK.

The segment at 1-52 (MITLNTLKDSTRKRKPRKRVGRGIGSKHGKTCGRGEKGAGARSGYKRRLGKE) is disordered. Positions 11–31 (TRKRKPRKRVGRGIGSKHGKT) are enriched in basic residues.

Belongs to the universal ribosomal protein uL15 family. Part of the 50S ribosomal subunit.

Binds to the 23S rRNA. In Protochlamydia amoebophila (strain UWE25), this protein is Large ribosomal subunit protein uL15.